Consider the following 225-residue polypeptide: MSTFKSLSLSALLFIAFLFTCARGATFNIINNCPFTVWAAAVPGGGKRLDRGQNWIINPGAGTKGARVWPRTGCNFDGAGRGKCQTGDCNGLLQCQAFGQPPNTLAEYALNQFNNLDFFDISLVDGFNVAMEFSPTSGGCTRGIKCTADINGQCPNELRAPGGCNNPCTVFKTDQYCCNSGNCGLTNFSKFFKDRCPDAYSYPKDDQTSTFTCPAGTNYKVVFCP.

A signal peptide spans 1–24; it reads MSTFKSLSLSALLFIAFLFTCARG. 8 disulfides stabilise this stretch: cysteine 33/cysteine 224, cysteine 74/cysteine 84, cysteine 89/cysteine 95, cysteine 140/cysteine 213, cysteine 146/cysteine 196, cysteine 154/cysteine 164, cysteine 168/cysteine 177, and cysteine 178/cysteine 183. A glycan (N-linked (GlcNAc...) asparagine) is linked at asparagine 187.

It belongs to the thaumatin family. N-glycosylated. As to expression, woody stem plug.

It localises to the secreted. Its function is as follows. Has antifungal activity. This is Thaumatin-like protein (tlp) from Actinidia deliciosa (Kiwi).